Here is a 501-residue protein sequence, read N- to C-terminus: Endonuclease domain-containing 1 protein (501 aa).

The first 21 residues, 1–21 (MGCARWLALGGLLALAGLLQA), serve as a signal peptide directing secretion. N6-acetyllysine is present on lysine 408.

The protein belongs to the DNA/RNA non-specific endonuclease family. In terms of assembly, interacts with RNF26; this interaction is important to modulate innate immune signaling through the cGAS-STING pathway.

The protein resides in the secreted. May act as a DNase and a RNase. Plays a role in the modulation of innate immune signaling through the cGAS-STING pathway by interacting with RNF26. In Mus musculus (Mouse), this protein is Endonuclease domain-containing 1 protein (Endod1).